The sequence spans 182 residues: Adenine phosphoribosyltransferase (182 aa).

Belongs to the purine/pyrimidine phosphoribosyltransferase family. Homodimer.

The protein resides in the cytoplasm. The enzyme catalyses AMP + diphosphate = 5-phospho-alpha-D-ribose 1-diphosphate + adenine. It participates in purine metabolism; AMP biosynthesis via salvage pathway; AMP from adenine: step 1/1. In terms of biological role, catalyzes a salvage reaction resulting in the formation of AMP, that is energically less costly than de novo synthesis. This Pseudomonas fluorescens (strain Pf0-1) protein is Adenine phosphoribosyltransferase.